A 178-amino-acid chain; its full sequence is Sec-independent protein translocase protein TatB (178 aa).

The chain crosses the membrane as a helical span at residues 2–22 (LPEIGAAELLIIAAVALIVVG). The interval 104-178 (HSPTGYENTV…KARKTAGSAE (75 aa)) is disordered. Pro residues predominate over residues 114-131 (EPPPPEPEPQPAAEPAPK). Residues 141 to 154 (PKAAAAPKAAAKPK) are compositionally biased toward low complexity.

The protein belongs to the TatB family. As to quaternary structure, the Tat system comprises two distinct complexes: a TatABC complex, containing multiple copies of TatA, TatB and TatC subunits, and a separate TatA complex, containing only TatA subunits. Substrates initially bind to the TatABC complex, which probably triggers association of the separate TatA complex to form the active translocon.

The protein localises to the cell inner membrane. In terms of biological role, part of the twin-arginine translocation (Tat) system that transports large folded proteins containing a characteristic twin-arginine motif in their signal peptide across membranes. Together with TatC, TatB is part of a receptor directly interacting with Tat signal peptides. TatB may form an oligomeric binding site that transiently accommodates folded Tat precursor proteins before their translocation. The chain is Sec-independent protein translocase protein TatB from Phenylobacterium zucineum (strain HLK1).